The following is an 85-amino-acid chain: Conotoxin Lt28.5 (85 aa).

The signal sequence occupies residues 1–21 (MPKLEMMLLVLLILPLCYIDA). The propeptide occupies 22 to 40 (VGPPPPWNMEDEIIEHWQK).

It belongs to the conotoxin D superfamily. Contains 5 disulfide bonds. In terms of tissue distribution, expressed by the venom duct.

The protein resides in the secreted. Functionally, probable neurotoxin. In Conus litteratus (Lettered cone), this protein is Conotoxin Lt28.5.